A 178-amino-acid chain; its full sequence is Large ribosomal subunit protein uL16 (178 aa).

Belongs to the universal ribosomal protein uL16 family.

This is Large ribosomal subunit protein uL16 from Saccharolobus solfataricus (strain ATCC 35092 / DSM 1617 / JCM 11322 / P2) (Sulfolobus solfataricus).